Reading from the N-terminus, the 162-residue chain is Large ribosomal subunit protein bL17 (162 aa).

The span at 125 to 140 shows a compositional bias: basic and acidic residues; that stretch reads AAKEAPAKEVAEEKAA. Residues 125-162 are disordered; sequence AAKEAPAKEVAEEKAAKPAKKAAPKKAEKEEAEDAAEA.

This sequence belongs to the bacterial ribosomal protein bL17 family. In terms of assembly, part of the 50S ribosomal subunit. Contacts protein L32.

This Oleidesulfovibrio alaskensis (strain ATCC BAA-1058 / DSM 17464 / G20) (Desulfovibrio alaskensis) protein is Large ribosomal subunit protein bL17.